Consider the following 160-residue polypeptide: MSEEKVFPMTAEGRDKLQAELEDLITRQRPEITNRIQIARSYGDLSENSEYQSAKDEQAFVEGRILTLKKMIENAEIIDPNATAADVVSLGKTVTFKELPDEEPETYAIVGSTESDPLAGKISNESAMAVALLDKKVGDKVSVPLPSGESIDVEILKVEK.

This sequence belongs to the GreA/GreB family.

Its function is as follows. Necessary for efficient RNA polymerase transcription elongation past template-encoded arresting sites. The arresting sites in DNA have the property of trapping a certain fraction of elongating RNA polymerases that pass through, resulting in locked ternary complexes. Cleavage of the nascent transcript by cleavage factors such as GreA or GreB allows the resumption of elongation from the new 3'terminus. GreA releases sequences of 2 to 3 nucleotides. This chain is Transcription elongation factor GreA, found in Leuconostoc citreum (strain KM20).